We begin with the raw amino-acid sequence, 252 residues long: Triosephosphate isomerase (252 aa).

Residue 9–11 (NWK) participates in substrate binding. Histidine 98 (electrophile) is an active-site residue. The Proton acceptor role is filled by glutamate 170. Positions 176 and 215 each coordinate substrate.

This sequence belongs to the triosephosphate isomerase family. Homodimer.

Its subcellular location is the cytoplasm. It carries out the reaction D-glyceraldehyde 3-phosphate = dihydroxyacetone phosphate. It participates in carbohydrate biosynthesis; gluconeogenesis. Its pathway is carbohydrate degradation; glycolysis; D-glyceraldehyde 3-phosphate from glycerone phosphate: step 1/1. Functionally, involved in the gluconeogenesis. Catalyzes stereospecifically the conversion of dihydroxyacetone phosphate (DHAP) to D-glyceraldehyde-3-phosphate (G3P). This chain is Triosephosphate isomerase, found in Buchnera aphidicola subsp. Baizongia pistaciae (strain Bp).